A 361-amino-acid polypeptide reads, in one-letter code: Probable purine permease 5 (361 aa).

A run of 9 helical transmembrane segments spans residues 37 to 57, 70 to 90, 105 to 125, 134 to 154, 158 to 178, 193 to 213, 235 to 255, 285 to 305, and 315 to 335; these read WILL…SSLL, WIIS…LLPT, LVLS…MYAY, TSSL…YLIV, LNAS…IIAL, YFAG…IFAL, VMVS…SNDF, LGVL…AGVL, and VAAV…SLVL. The EamA domain maps to 75 to 178; sequence VAVAGWPITC…ITGAMAIIAL (104 aa).

The protein belongs to the purine permeases (TC 2.A.7.14) family.

It localises to the membrane. The protein is Probable purine permease 5 (PUP5) of Arabidopsis thaliana (Mouse-ear cress).